Here is a 457-residue protein sequence, read N- to C-terminus: Fibrinogen C domain-containing protein 1-B (457 aa).

The interval 1-21 is disordered; the sequence is MGSDRWKNIRGTPQMEDSVQE. Residues 1–33 lie on the Cytoplasmic side of the membrane; that stretch reads MGSDRWKNIRGTPQMEDSVQEKSQRKGCGYILC. A helical; Signal-anchor for type II membrane protein transmembrane segment spans residues 34–54; that stretch reads TVLLSVAVLLAVTVTGAVLFM. The Extracellular segment spans residues 55–457; the sequence is NQYHAPSTEP…MKIRPQREEN (403 aa). Residues 231-454 form the Fibrinogen C-terminal domain; the sequence is CANGSKPRDC…FTEMKIRPQR (224 aa). N-linked (GlcNAc...) asparagine glycosylation occurs at Asn-233. A disulfide bridge links Cys-240 with Cys-269. N-linked (GlcNAc...) asparagine glycosylation occurs at Asn-336. Ca(2+) is bound by residues Asp-389 and Asp-391. A disulfide bridge links Cys-397 with Cys-410.

In terms of assembly, homotetramer; disulfide-linked.

The protein resides in the membrane. Its function is as follows. Acetyl group-binding receptor which shows a calcium-dependent binding to acetylated structures such as chitin, some N-acetylated carbohydrates, and amino acids. This is Fibrinogen C domain-containing protein 1-B (fibcd1-b) from Xenopus laevis (African clawed frog).